Reading from the N-terminus, the 353-residue chain is Protein RecA (353 aa).

Position 67–74 (67–74) interacts with ATP; the sequence is GPESSGKT.

Belongs to the RecA family.

The protein localises to the cytoplasm. Functionally, can catalyze the hydrolysis of ATP in the presence of single-stranded DNA, the ATP-dependent uptake of single-stranded DNA by duplex DNA, and the ATP-dependent hybridization of homologous single-stranded DNAs. It interacts with LexA causing its activation and leading to its autocatalytic cleavage. The polypeptide is Protein RecA (Salmonella paratyphi A (strain ATCC 9150 / SARB42)).